A 169-amino-acid polypeptide reads, in one-letter code: Peptide methionine sulfoxide reductase MsrA (169 aa).

The active site involves Cys10.

Belongs to the MsrA Met sulfoxide reductase family.

The enzyme catalyses L-methionyl-[protein] + [thioredoxin]-disulfide + H2O = L-methionyl-(S)-S-oxide-[protein] + [thioredoxin]-dithiol. It catalyses the reaction [thioredoxin]-disulfide + L-methionine + H2O = L-methionine (S)-S-oxide + [thioredoxin]-dithiol. In terms of biological role, has an important function as a repair enzyme for proteins that have been inactivated by oxidation. Catalyzes the reversible oxidation-reduction of methionine sulfoxide in proteins to methionine. The chain is Peptide methionine sulfoxide reductase MsrA from Streptococcus agalactiae serotype III (strain NEM316).